Consider the following 201-residue polypeptide: MDDADKSCSPSLDHSDINDPMIVAVESLDTSKKRKLHAEESDLLPLPKHFCSEHQASLVNSSCPSSVIDYAECSYAMENTKTSDEASSSASFTGPSLYMFKDSIYSTGSSSSGYAATSSIEQCFSKVDHKTQEDTQDFTHMEFIYHDSEFAVEDLQEVLNPVESYILSSARWSVSNQDSKEATTKPTIDQEFEQYFSTLMM.

The Nuclear localization sequence (NLS) signature appears at 32–35 (KKRK). The short motif at 43–46 (LLPL) is the Nuclear export sequence (NES) element.

This sequence belongs to the FHY1 protein family. Homodimer and heterodimer with FHY1. Interacts with PHYA, especially upon far-red (FR) light illumination. Binds to LAF1 and HFR1. In terms of processing, inactivated by rapid reversible PHYA-mediated phosphorylation.

It is found in the nucleus. It localises to the cytoplasm. In terms of biological role, can activate transcription. Essential for light-regulated PHYA nuclear accumulation and subsequent PHYA phototropic signaling processes. PHYA-specific signal transducer in response to continuous FR lights. Mediates the association of PHYA with HFR1 and LAF1 in the nucleus in response to FR conditions. Contributes to inhibition of hypocotyl elongation in continuous blue light (B). The chain is Protein FAR-RED-ELONGATED HYPOCOTYL 1-LIKE from Arabidopsis thaliana (Mouse-ear cress).